The sequence spans 329 residues: GTP 3',8-cyclase 1 (329 aa).

The 224-residue stretch at 7–230 (GQGRQIDYLR…LDSAEQSGGP (224 aa)) folds into the Radical SAM core domain. Position 16 (R16) interacts with GTP. [4Fe-4S] cluster contacts are provided by C23 and C27. Residue Y29 participates in S-adenosyl-L-methionine binding. C30 lines the [4Fe-4S] cluster pocket. R65 contacts GTP. G69 serves as a coordination point for S-adenosyl-L-methionine. T96 lines the GTP pocket. Residue S120 coordinates S-adenosyl-L-methionine. Residue K157 coordinates GTP. M191 is an S-adenosyl-L-methionine binding site. Residues C255 and C258 each contribute to the [4Fe-4S] cluster site. 260 to 262 (RLR) is a binding site for GTP. Residue C272 participates in [4Fe-4S] cluster binding.

It belongs to the radical SAM superfamily. MoaA family. Monomer and homodimer. The cofactor is [4Fe-4S] cluster.

The enzyme catalyses GTP + AH2 + S-adenosyl-L-methionine = (8S)-3',8-cyclo-7,8-dihydroguanosine 5'-triphosphate + 5'-deoxyadenosine + L-methionine + A + H(+). Its pathway is cofactor biosynthesis; molybdopterin biosynthesis. Its function is as follows. Catalyzes the cyclization of GTP to (8S)-3',8-cyclo-7,8-dihydroguanosine 5'-triphosphate. The chain is GTP 3',8-cyclase 1 (moaA1) from Pseudomonas aeruginosa (strain ATCC 15692 / DSM 22644 / CIP 104116 / JCM 14847 / LMG 12228 / 1C / PRS 101 / PAO1).